A 436-amino-acid chain; its full sequence is Enolase (436 aa).

Glutamine 167 lines the (2R)-2-phosphoglycerate pocket. The active-site Proton donor is the glutamate 209. Mg(2+)-binding residues include aspartate 246, glutamate 291, and aspartate 318. 4 residues coordinate (2R)-2-phosphoglycerate: lysine 343, arginine 372, serine 373, and lysine 394. Residue lysine 343 is the Proton acceptor of the active site.

This sequence belongs to the enolase family. In terms of assembly, component of the RNA degradosome, a multiprotein complex involved in RNA processing and mRNA degradation. It depends on Mg(2+) as a cofactor.

Its subcellular location is the cytoplasm. The protein resides in the secreted. It is found in the cell surface. It carries out the reaction (2R)-2-phosphoglycerate = phosphoenolpyruvate + H2O. It participates in carbohydrate degradation; glycolysis; pyruvate from D-glyceraldehyde 3-phosphate: step 4/5. Its function is as follows. Catalyzes the reversible conversion of 2-phosphoglycerate (2-PG) into phosphoenolpyruvate (PEP). It is essential for the degradation of carbohydrates via glycolysis. The protein is Enolase of Haemophilus influenzae (strain ATCC 51907 / DSM 11121 / KW20 / Rd).